Consider the following 141-residue polypeptide: Hemoglobin subunit alpha (141 aa).

The region spanning 1-141 (VLSAADKTAI…VATALGSHYR (141 aa)) is the Globin domain. Residue His-59 participates in O2 binding. Position 88 (His-88) interacts with heme b.

The protein belongs to the globin family. Heterotetramer of two alpha chains and two beta chains. In terms of tissue distribution, red blood cells.

In terms of biological role, involved in oxygen transport from the lung to the various peripheral tissues. The sequence is that of Hemoglobin subunit alpha (HBA) from Squalus acanthias (Spiny dogfish).